The primary structure comprises 267 residues: 2-keto-3-deoxy-L-rhamnonate aldolase (267 aa).

The Proton acceptor role is filled by His-49. Gln-151 is a binding site for substrate. Glu-153 serves as a coordination point for Mg(2+). The substrate site is built by Ala-178 and Asp-179. Asp-179 is a Mg(2+) binding site.

Belongs to the HpcH/HpaI aldolase family. KDR aldolase subfamily. In terms of assembly, homohexamer. Mg(2+) serves as cofactor.

It catalyses the reaction 2-dehydro-3-deoxy-L-rhamnonate = (S)-lactaldehyde + pyruvate. Its function is as follows. Catalyzes the reversible retro-aldol cleavage of 2-keto-3-deoxy-L-rhamnonate (KDR) to pyruvate and lactaldehyde. In Salmonella gallinarum (strain 287/91 / NCTC 13346), this protein is 2-keto-3-deoxy-L-rhamnonate aldolase.